The chain runs to 127 residues: MLATLLLALIRAYQMTLSRLIVALMGPVCRFEPSCSRYAAACIVDHGALRGSLLSLKRLCRCHPFHPGGFDPPPPPRLHRAAAARMPRQRDADPRDTTRCSSTGAELASHASSPCRAGFSGRVTLMD.

Residues 71 to 106 (DPPPPPRLHRAAAARMPRQRDADPRDTTRCSSTGAE) are disordered. The segment covering 88–98 (RQRDADPRDTT) has biased composition (basic and acidic residues).

It belongs to the UPF0161 family.

It is found in the cell inner membrane. In terms of biological role, could be involved in insertion of integral membrane proteins into the membrane. This Sorangium cellulosum (strain So ce56) (Polyangium cellulosum (strain So ce56)) protein is Putative membrane protein insertion efficiency factor.